The sequence spans 224 residues: 7-cyano-7-deazaguanine synthase (224 aa).

9–19 contacts ATP; the sequence is ISGGMDSTLCA. Positions 190, 198, 201, and 204 each coordinate Zn(2+).

The protein belongs to the QueC family. Zn(2+) is required as a cofactor.

The enzyme catalyses 7-carboxy-7-deazaguanine + NH4(+) + ATP = 7-cyano-7-deazaguanine + ADP + phosphate + H2O + H(+). The protein operates within purine metabolism; 7-cyano-7-deazaguanine biosynthesis. Catalyzes the ATP-dependent conversion of 7-carboxy-7-deazaguanine (CDG) to 7-cyano-7-deazaguanine (preQ(0)). The chain is 7-cyano-7-deazaguanine synthase from Campylobacter jejuni subsp. doylei (strain ATCC BAA-1458 / RM4099 / 269.97).